The chain runs to 1024 residues: MTMITDSLAVVLQRRDWENPGVTQLNRLAAHPPFASWRNSEEARTDRPSQESRSLNGEWRFAWFPAPEAVPESWLERDLPDADTVIVPSNWQMHGYDAPIYTNVTYPIAVNPPYVPTENPTGCYSLTFNIDESWLQEGQTRIIFDGVNSAFHLWCNGRWVGYGQDSRLPSEFDLSAFLHAGENRLAVMVLRWSDGSYLEDQDMWRMSGIFRDVSLLHKPSTQISDFHVATHFNDDFSRAVLEADVQMYGELRDELRVTVSLWQGETQVASGTAPFGGEIIDERGGYADHVTLRLNVENPKLWSAEIPNLYRAVVELHTADGTLIEAEACDVGFREVRIENGLLLLNGKPLLIRGVNRHEHHPLHGQVMDEQTMVQDILLMKQNNFNAVRCSHYPNHPLWYTLCDHYGLYVVDEANIETHGMVPMNRLTDDPRWLPAMSERVTRMVQRDRNHPSVIIWSLGNESGHGANHDALYRWIKSVDPSRPVQYEGGGADTFATDIICPMYARVDEDQPFPAVPKWSIKKWLSLPGETRPLILCEYAHAMGNSLGGFAKYWQAFRQYPRLQGGFVWDWVDQSLIKYDENGNPWSAYGGDFGDTPNDRQFCMNGLVFADRTPHPALTEAKHQQQFFQFSLSGRTIEVTSEYLFRHSDNELLHWMVALDGKPLASGEVPLDVAPQGKQLIELPGLPQPKSAGQLWLTVHVVQPNATTWSAAGHISAWQQWRLAENLSVTLPSAPHAIPQLTTSETDFCIELDNKRWQFNRQSGFLSQMWIGDKKQLLTPLRDQFTRAPLDNDIGVSEATRIDPNAWVERWKAAGHYQAEAALLQCTADTLADAVLITTVHAWQHQGKTLFISRKTYRIDGSGQMAITVDVEVASNTPHPARIGLTCQLAQVAERVNWLGLGPQENYPDRLTAACFDRWDLPLSDMYTPYVFPSENGLRCGTRELNYGPHQWRGDFQFNISRYSQQQLMETSHRHLLHAEEGTWLNIDGFHMGIGGDDSWSPSVSAEFQLSAGSYHYQLLWCQK.

Asparagine 103 and aspartate 202 together coordinate substrate. A Na(+)-binding site is contributed by aspartate 202. Mg(2+)-binding residues include glutamate 417, histidine 419, and glutamate 462. Substrate is bound by residues glutamate 462 and glutamate 538 to histidine 541. Glutamate 462 (proton donor) is an active-site residue. Catalysis depends on glutamate 538, which acts as the Nucleophile. Residue asparagine 598 participates in Mg(2+) binding. The Na(+) site is built by phenylalanine 602 and asparagine 605. 2 residues coordinate substrate: asparagine 605 and tryptophan 1000.

The protein belongs to the glycosyl hydrolase 2 family. As to quaternary structure, homotetramer. Requires Mg(2+) as cofactor. Na(+) is required as a cofactor.

It carries out the reaction Hydrolysis of terminal non-reducing beta-D-galactose residues in beta-D-galactosides.. This chain is Beta-galactosidase 2, found in Klebsiella pneumoniae subsp. pneumoniae (strain ATCC 700721 / MGH 78578).